Reading from the N-terminus, the 191-residue chain is Protein YceI (191 aa).

The signal sequence occupies residues 1–22; it reads MKKSLLGLTFASLMFSAGSAVA.

Belongs to the UPF0312 family. Type 1 subfamily.

It is found in the periplasm. This Escherichia coli O6:H1 (strain CFT073 / ATCC 700928 / UPEC) protein is Protein YceI.